We begin with the raw amino-acid sequence, 175 residues long: Protein FanH (175 aa).

The N-terminal stretch at 1 to 20 (MIKKVPVLLFFMASISITHA) is a signal peptide. The cysteines at positions 39 and 77 are disulfide-linked.

It is found in the fimbrium. Functionally, involved in the biosynthesis of K99 fimbriae. The polypeptide is Protein FanH (fanH) (Escherichia coli).